The following is a 470-amino-acid chain: Serine/threonine-protein kinase-like protein At1g28390 (470 aa).

The Protein kinase domain occupies 52 to 333 (FSANNFLGKG…LEVVECLKTV (282 aa)). Residues 58 to 66 (LGKGSHGRV) and K81 each bind ATP. D186 serves as the catalytic Proton acceptor. 2 positions are modified to phosphothreonine: T221 and T226. At Y234 the chain carries Phosphotyrosine.

Belongs to the protein kinase superfamily. Ser/Thr protein kinase family.

It catalyses the reaction L-seryl-[protein] + ATP = O-phospho-L-seryl-[protein] + ADP + H(+). It carries out the reaction L-threonyl-[protein] + ATP = O-phospho-L-threonyl-[protein] + ADP + H(+). This is Serine/threonine-protein kinase-like protein At1g28390 from Arabidopsis thaliana (Mouse-ear cress).